Reading from the N-terminus, the 405-residue chain is Arginine biosynthesis bifunctional protein ArgJ (405 aa).

The segment covering 1–18 (MTSADKNNPDTSTAQGSS) has biased composition (polar residues). The segment at 1-21 (MTSADKNNPDTSTAQGSSADL) is disordered. The substrate site is built by threonine 167, lysine 189, threonine 200, glutamate 281, asparagine 400, and threonine 405. Threonine 200 functions as the Nucleophile in the catalytic mechanism.

Belongs to the ArgJ family. As to quaternary structure, heterotetramer of two alpha and two beta chains.

It localises to the cytoplasm. The catalysed reaction is N(2)-acetyl-L-ornithine + L-glutamate = N-acetyl-L-glutamate + L-ornithine. It carries out the reaction L-glutamate + acetyl-CoA = N-acetyl-L-glutamate + CoA + H(+). The protein operates within amino-acid biosynthesis; L-arginine biosynthesis; L-ornithine and N-acetyl-L-glutamate from L-glutamate and N(2)-acetyl-L-ornithine (cyclic): step 1/1. It functions in the pathway amino-acid biosynthesis; L-arginine biosynthesis; N(2)-acetyl-L-ornithine from L-glutamate: step 1/4. Its function is as follows. Catalyzes two activities which are involved in the cyclic version of arginine biosynthesis: the synthesis of N-acetylglutamate from glutamate and acetyl-CoA as the acetyl donor, and of ornithine by transacetylation between N(2)-acetylornithine and glutamate. The protein is Arginine biosynthesis bifunctional protein ArgJ of Corynebacterium jeikeium (strain K411).